A 332-amino-acid chain; its full sequence is MPNWLSLAEQVMEGYELADEEALAILDCPDDELLLLLQGAYRIRSVYYGNKVKLNMIMNAKSGLCPENCGYCSQSAVATAPVKTYKMLDKETLLRGAEEAYRLQIGTYCIVASGRGPSDKEVDIVVSAVKEIKERFGLKVCACLGLLKPEQAARLKEAGVDRYNHNINTSKQHHPNITTSHTYDDRVRTVETVKEAGLSPCSGVIIGMKETKQDIVDMARSLRELDADSIPVNFLHAIDGTPLAGTNELNPRYCLKVLALFRYMNPTKEIRIAGGREVNLRSLQPLGLYAANSIFVGDYLTTLGQEKSADYKMLEDLGFEIEFSPAPQIGVV.

The region spanning 47-273 (YYGNKVKLNM…MNPTKEIRIA (227 aa)) is the Radical SAM core domain. 3 residues coordinate [4Fe-4S] cluster: Cys65, Cys69, and Cys72. [2Fe-2S] cluster contacts are provided by Cys109, Cys141, Cys201, and Arg271.

Belongs to the radical SAM superfamily. Biotin synthase family. In terms of assembly, homodimer. [4Fe-4S] cluster is required as a cofactor. The cofactor is [2Fe-2S] cluster.

The enzyme catalyses (4R,5S)-dethiobiotin + (sulfur carrier)-SH + 2 reduced [2Fe-2S]-[ferredoxin] + 2 S-adenosyl-L-methionine = (sulfur carrier)-H + biotin + 2 5'-deoxyadenosine + 2 L-methionine + 2 oxidized [2Fe-2S]-[ferredoxin]. The protein operates within cofactor biosynthesis; biotin biosynthesis; biotin from 7,8-diaminononanoate: step 2/2. Functionally, catalyzes the conversion of dethiobiotin (DTB) to biotin by the insertion of a sulfur atom into dethiobiotin via a radical-based mechanism. This Geobacillus thermodenitrificans (strain NG80-2) protein is Biotin synthase.